A 164-amino-acid polypeptide reads, in one-letter code: ATP synthase subunit b (164 aa).

Residues 6–26 (GELVGNFILVTGSVIVLLLLI) form a helical membrane-spanning segment.

The protein belongs to the ATPase B chain family. As to quaternary structure, F-type ATPases have 2 components, F(1) - the catalytic core - and F(0) - the membrane proton channel. F(1) has five subunits: alpha(3), beta(3), gamma(1), delta(1), epsilon(1). F(0) has three main subunits: a(1), b(2) and c(10-14). The alpha and beta chains form an alternating ring which encloses part of the gamma chain. F(1) is attached to F(0) by a central stalk formed by the gamma and epsilon chains, while a peripheral stalk is formed by the delta and b chains.

It localises to the cell membrane. Its function is as follows. F(1)F(0) ATP synthase produces ATP from ADP in the presence of a proton or sodium gradient. F-type ATPases consist of two structural domains, F(1) containing the extramembraneous catalytic core and F(0) containing the membrane proton channel, linked together by a central stalk and a peripheral stalk. During catalysis, ATP synthesis in the catalytic domain of F(1) is coupled via a rotary mechanism of the central stalk subunits to proton translocation. Functionally, component of the F(0) channel, it forms part of the peripheral stalk, linking F(1) to F(0). The chain is ATP synthase subunit b from Streptococcus pyogenes serotype M6 (strain ATCC BAA-946 / MGAS10394).